We begin with the raw amino-acid sequence, 246 residues long: DNA-directed RNA polymerase subunit alpha (246 aa).

It belongs to the RNA polymerase alpha chain family. As to quaternary structure, in plastids the minimal PEP RNA polymerase catalytic core is composed of four subunits: alpha, beta, beta', and beta''. When a (nuclear-encoded) sigma factor is associated with the core the holoenzyme is formed, which can initiate transcription (Potential).

The protein localises to the plastid. It carries out the reaction RNA(n) + a ribonucleoside 5'-triphosphate = RNA(n+1) + diphosphate. DNA-dependent RNA polymerase catalyzes the transcription of DNA into RNA using the four ribonucleoside triphosphates as substrates. The sequence is that of DNA-directed RNA polymerase subunit alpha (rpoA) from Helicosporidium sp. subsp. Simulium jonesii (Green alga).